Here is a 269-residue protein sequence, read N- to C-terminus: Integral membrane protein 2C (269 aa).

Thr-39 bears the Phosphothreonine mark. Residues 57-77 (VGGVCYLSMGMVVLLMGLVFA) traverse the membrane as a helical; Signal-anchor for type II membrane protein segment. The region spanning 138 to 232 (FGGGDPADII…LCNGKDTYRL (95 aa)) is the BRICHOS domain. Cys-165 and Cys-224 form a disulfide bridge. N-linked (GlcNAc...) asparagine glycosylation occurs at Asn-171.

Belongs to the ITM2 family. Interacts with BACE1. Interacts with APP. Interacts with STMN2. Type I membrane-bound, as well as soluble, furin has a pre-eminent role in ITM2C proteolytic processing. PCSK7 and PCSK5 may also be involved although to a lesser extent. The soluble form of PCSK7 is incapable of processing ITM2C. Fails to undergo shedding by ADAM10 and intramembrane cleavage by SPPL2B.

It localises to the lysosome membrane. The protein localises to the cell membrane. Negative regulator of amyloid-beta peptide production. May inhibit the processing of APP by blocking its access to alpha- and beta-secretase. Binding to the beta-secretase-cleaved APP C-terminal fragment is negligible, suggesting that ITM2C is a poor gamma-secretase cleavage inhibitor. May play a role in TNF-induced cell death and neuronal differentiation. The sequence is that of Integral membrane protein 2C (ITM2C) from Sus scrofa (Pig).